The sequence spans 348 residues: MKMTFRWYGKDDPISLEYIKQIPGMKGIVSAIYDVPVGEVWPLDKIKALKQEIEDAGMELSVIESVPVHEDIKLGKPTRDKYIENYCETLRNLGQAGIKIVCYNFMPVFDWTRSQLDYRLDDGSTCLIYDEQDVEKMNPLSGELSLPGWDSSYTKEDLKQLFDDYKEVDEETLWDNLNYFIQKVIPVAEEEDVLMAIHPDDPPWNIFGLPRIITNKENLERFINLYDSKYNGLTMCSGSLGADRRNDFVDMLRYFGEKGRVNFVHARNVKLIGDKSFQESAHLSEKGSIDMYEVVKTLHSFDYHGPIRPDHGRMIWGETGKPGYGLYDRALGATYLNGLYEAVSKNNK.

It belongs to the mannonate dehydratase family. The cofactor is Fe(2+). Requires Mn(2+) as cofactor.

It catalyses the reaction D-mannonate = 2-dehydro-3-deoxy-D-gluconate + H2O. Its pathway is carbohydrate metabolism; pentose and glucuronate interconversion. Catalyzes the dehydration of D-mannonate. This is Mannonate dehydratase from Staphylococcus haemolyticus (strain JCSC1435).